Reading from the N-terminus, the 425-residue chain is Kynurenine/alpha-aminoadipate aminotransferase, mitochondrial (425 aa).

The transit peptide at 1–29 directs the protein to the mitochondrion; that stretch reads MNYARFITAASAARNPSPIRTMTDILSRG. Arg-20 serves as a coordination point for substrate. Lys-69 is modified (N6-acetyllysine). Residues Tyr-74 and Tyr-142 each contribute to the substrate site. Lys-179 is modified (N6-acetyllysine). A disordered region spans residues 181–208; the sequence is EDAKNPQKNTPKFLYTVPNGNNPTGNSL. Residues 198-208 are compositionally biased toward polar residues; that stretch reads PNGNNPTGNSL. Asn-202 lines the substrate pocket. Lys-263 carries the N6-(pyridoxal phosphate)lysine; alternate modification. Lys-263, Lys-339, and Lys-367 each carry N6-acetyllysine; alternate. An N6-succinyllysine; alternate mark is found at Lys-263, Lys-339, and Lys-367. Residue Arg-399 participates in substrate binding. An N6-acetyllysine modification is found at Lys-422.

This sequence belongs to the class-I pyridoxal-phosphate-dependent aminotransferase family. In terms of assembly, homodimer. It depends on pyridoxal 5'-phosphate as a cofactor. In terms of tissue distribution, higher expression in the liver. Also found in heart, brain, kidney, pancreas, prostate, testis and ovary.

It localises to the mitochondrion. It carries out the reaction glycine + 2-oxoglutarate = glyoxylate + L-glutamate. It catalyses the reaction L-kynurenine + 2-oxoglutarate = kynurenate + L-glutamate + H2O. The enzyme catalyses L-kynurenine + glyoxylate = kynurenate + glycine + H2O. The catalysed reaction is 3-hydroxy-L-kynurenine + glyoxylate = xanthurenate + glycine + H2O. It carries out the reaction 2-oxohexanoate + L-kynurenine = L-2-aminohexanoate + kynurenate + H2O. It catalyses the reaction 3-phenylpyruvate + L-kynurenine = kynurenate + L-phenylalanine + H2O. The enzyme catalyses 4-methylsulfanyl-2-oxobutanoate + L-kynurenine = kynurenate + L-methionine + H2O. The catalysed reaction is 2-oxo-3-sulfanylpropanoate + L-kynurenine = kynurenate + L-cysteine + H2O. It carries out the reaction indole-3-pyruvate + L-kynurenine = kynurenate + L-tryptophan + H2O. It catalyses the reaction 2-oxopentanoate + L-kynurenine = L-2-aminopentanoate + kynurenate + H2O. The enzyme catalyses 4-methyl-2-oxopentanoate + L-kynurenine = kynurenate + L-leucine + H2O. The catalysed reaction is L-2-aminoadipate + 2-oxoglutarate = 2-oxoadipate + L-glutamate. It carries out the reaction glyoxylate + L-methionine = 4-methylsulfanyl-2-oxobutanoate + glycine. It catalyses the reaction L-2-aminoadipate + glyoxylate = 2-oxoadipate + glycine. The enzyme catalyses L-tyrosine + glyoxylate = 3-(4-hydroxyphenyl)pyruvate + glycine. The catalysed reaction is glyoxylate + L-phenylalanine = 3-phenylpyruvate + glycine. It carries out the reaction L-tryptophan + glyoxylate = indole-3-pyruvate + glycine. It catalyses the reaction L-leucine + glyoxylate = 4-methyl-2-oxopentanoate + glycine. The enzyme catalyses 2-oxobutanoate + L-kynurenine = (2S)-2-aminobutanoate + kynurenate + H2O. The catalysed reaction is 2-oxoadipate + L-kynurenine = L-2-aminoadipate + kynurenate + H2O. Its pathway is amino-acid degradation; L-lysine degradation via saccharopine pathway; glutaryl-CoA from L-lysine: step 4/6. With respect to regulation, kynurenine transaminase activity is competitively inhibited by aminoadipate, asparagine, glutamate, histidine, cysteine, lysine, 3-hydroxy-kynurenine and phenylalanine. In terms of biological role, transaminase with broad substrate specificity. Has transaminase activity towards aminoadipate, kynurenine, methionine and glutamate. Shows activity also towards tryptophan, aspartate and hydroxykynurenine. Accepts a variety of oxo-acids as amino-group acceptors, with a preference for 2-oxoglutarate, 2-oxocaproic acid, phenylpyruvate and alpha-oxo-gamma-methiol butyric acid. Can also use glyoxylate as amino-group acceptor (in vitro). This Homo sapiens (Human) protein is Kynurenine/alpha-aminoadipate aminotransferase, mitochondrial.